We begin with the raw amino-acid sequence, 189 residues long: Pyridoxal 5'-phosphate synthase subunit PdxT (189 aa).

An L-glutamine-binding site is contributed by 52 to 54 (GES). The active-site Nucleophile is the cysteine 81. L-glutamine is bound by residues arginine 108 and 136–137 (IR). Active-site charge relay system residues include histidine 172 and glutamate 174.

Belongs to the glutaminase PdxT/SNO family. In terms of assembly, in the presence of PdxS, forms a dodecamer of heterodimers. Only shows activity in the heterodimer.

The enzyme catalyses aldehydo-D-ribose 5-phosphate + D-glyceraldehyde 3-phosphate + L-glutamine = pyridoxal 5'-phosphate + L-glutamate + phosphate + 3 H2O + H(+). The catalysed reaction is L-glutamine + H2O = L-glutamate + NH4(+). The protein operates within cofactor biosynthesis; pyridoxal 5'-phosphate biosynthesis. Its function is as follows. Catalyzes the hydrolysis of glutamine to glutamate and ammonia as part of the biosynthesis of pyridoxal 5'-phosphate. The resulting ammonia molecule is channeled to the active site of PdxS. The sequence is that of Pyridoxal 5'-phosphate synthase subunit PdxT from Haemophilus ducreyi (strain 35000HP / ATCC 700724).